A 462-amino-acid chain; its full sequence is MAPAQNQITSKHVAVIGAGPAGLITSRELRREGHSVVVFEREKQVGGLWVYTPKSDSDPLSLDPTRSKVHSSIYESLRTNVPRESMGVRDFPFLPRFDDESRDARRYPNHREVLAYIQDFAREFKIEEMIRFETEVVRVEPVDNGNWRVQSKNSGGFLEDEIYDAVVVCNGHYTEPNIAHIPGIKSWPGKQIHSHNYRVPDPFENEVVVVIGNFASGADISRDIAKVAKEVHIASRAREPHTYEKISVPQNNLWMHSEIDTTHEDGSIVFKNGKVIFADSIVYCTGYKYNFPFLETNGYLRIDEKRVEPLYKHVFPPALAPGLAFVGLPAMGIVFVMFEIQSKWVAAVLSGRVTLPSTDKMMEDINAWYASLDALGIPKRHTHTIGRIQSEYLNWVAKESGCELVERWRGQEVDGGYLRLVAHPETYRDEWDDDELIEEAYNDFSRKKLISVDPSYYLENGR.

17 to 22 is an FAD binding site; that stretch reads GAGPAG. 212–217 provides a ligand contact to NADP(+); the sequence is GNFASG. The chain crosses the membrane as a helical span at residues 318–338; that stretch reads ALAPGLAFVGLPAMGIVFVMF.

This sequence belongs to the FMO family.

It localises to the membrane. It catalyses the reaction a (Z)-omega-(methylsulfanyl)-N-sulfo-alkylhydroximate S-glucoside + NADPH + O2 + H(+) = a (Z)-omega-(methylsulfinyl)-alkyl-glucosinolate + NADP(+) + H2O. Its function is as follows. Catalyzes the conversion of methylthioalkyl glucosinolates of any chain length into methylsulfinylalkyl glucosinolates. Prefers probably short-chain methylthioalkyl glucosinolates in cv. Landsberg erecta. The chain is Flavin-containing monooxygenase FMO GS-OX3 (FMOGS-OX3) from Arabidopsis thaliana (Mouse-ear cress).